The chain runs to 309 residues: Putative glycosyltransferase 48 (309 aa).

Belongs to the glycosyltransferase group 1 family. Glycosyltransferase 4 subfamily.

The protein is Putative glycosyltransferase 48 (SIFV0048) of Saccharolobus islandicus (Sulfolobus islandicus).